A 351-amino-acid polypeptide reads, in one-letter code: Transcription elongation factor A N-terminal and central domain-containing protein (351 aa).

The region spanning 5 to 82 (NQIAARASLI…SKWKAVYKQT (78 aa)) is the TFIIS N-terminal domain. Disordered regions lie at residues 86 to 119 (ARNSPKLFPVRGNKEENSGPSHDPSQNETLGICS) and 144 to 169 (LKPKEEHFGDGDPESTGKRSSELLDP). Residues 103-119 (SGPSHDPSQNETLGICS) show a composition bias toward polar residues. Residues 145 to 165 (KPKEEHFGDGDPESTGKRSSE) are compositionally biased toward basic and acidic residues. The TFIIS central domain occupies 173-289 (MRTKCIELLY…EHYLPQVIDG (117 aa)).

The sequence is that of Transcription elongation factor A N-terminal and central domain-containing protein (TCEANC) from Homo sapiens (Human).